Consider the following 836-residue polypeptide: Glutamate receptor ionotropic, kainate 1 (836 aa).

The first 30 residues, 1–30 (MERGTVLIQPGLWTRDTSWTLLYFLCYILP), serve as a signal peptide directing secretion. Topologically, residues 31-561 (QTSPQVLRIG…VFSFLNPLSP (531 aa)) are extracellular. Residues Asn-68, Asn-74, Asn-276, Asn-379, Asn-413, Asn-424, and Asn-431 are each glycosylated (N-linked (GlcNAc...) asparagine). The L-glutamate site is built by Pro-516, Thr-518, and Arg-523. Asn-546 carries an N-linked (GlcNAc...) asparagine glycan. Residues 562 to 582 (DIWMYVLLACLGVSCVLFVIA) traverse the membrane as a helical segment. Over 583-638 (RFTPYEWYNPHPCNPDSDVVENNFTLLNSFWFGVGALMQQGSELMPKALSTRIVGG) the chain is Cytoplasmic. A helical transmembrane segment spans residues 639–659 (IWWFFTLIIISSYTANLAAFL). Topologically, residues 660–721 (TVERMESPID…RQPSALGVEN (62 aa)) are extracellular. Positions 689 and 690 each coordinate L-glutamate. Residues 722 to 742 (IGGIFIVLAAGLVLSVFVAIG) traverse the membrane as a helical segment. The Cytoplasmic portion of the chain corresponds to 743 to 836 (EFIYKSRKNN…RRTQRKETVA (94 aa)).

This sequence belongs to the glutamate-gated ion channel (TC 1.A.10.1) family. GRIK1 subfamily. Homotetramer or heterotetramer of pore-forming glutamate receptor subunits. Tetramers may be formed by the dimerization of dimers. Can form functional heteromeric receptors with GRIK4 and GRIK5. Interacts with KLHL17. As to expression, most abundant in the cerebellum. Also present in the suprachiasmatic nuclei of the hypothalamus.

Its subcellular location is the cell membrane. It localises to the postsynaptic cell membrane. The catalysed reaction is Ca(2+)(in) = Ca(2+)(out). Functionally, ionotropic glutamate receptor that functions as a cation-permeable ligand-gated ion channel, gated by L-glutamate and the glutamatergic agonist kainic acid. L-glutamate acts as an excitatory neurotransmitter at many synapses in the central nervous system. Binding of the excitatory neurotransmitter L-glutamate induces a conformation change, leading to the opening of the cation channel, and thereby converts the chemical signal to an electrical impulse. The receptor then desensitizes rapidly and enters a transient inactive state, characterized by the presence of bound agonist. The sequence is that of Glutamate receptor ionotropic, kainate 1 (Grik1) from Mus musculus (Mouse).